Here is a 432-residue protein sequence, read N- to C-terminus: Isocitrate lyase (432 aa).

A disordered region spans residues 1–24 (MSNVGKPRTAQEIQQDWDTNPRWN). Over residues 11–22 (QEIQQDWDTNPR) the composition is skewed to polar residues. 93-95 (SGW) serves as a coordination point for substrate. A Mg(2+)-binding site is contributed by Asp155. Cys193 serves as the catalytic Proton acceptor. Residues 194-195 (GH), Arg230, 315-319 (NCSPS), and Thr349 each bind substrate.

Belongs to the isocitrate lyase/PEP mutase superfamily. Isocitrate lyase family. As to quaternary structure, homotetramer. Mg(2+) serves as cofactor.

The enzyme catalyses D-threo-isocitrate = glyoxylate + succinate. Its pathway is carbohydrate metabolism; glyoxylate cycle; (S)-malate from isocitrate: step 1/2. Its activity is regulated as follows. Inhibited by 3-phosphoglycerate, 6-phosphogluconate, phosphoenolpyruvate (PEP), fructose 1,6-bisphosphate, glycolate, oxalate, and itaconate. In terms of biological role, involved in the metabolic adaptation in response to environmental changes. Catalyzes the reversible formation of succinate and glyoxylate from isocitrate, a key step of the glyoxylate cycle, which operates as an anaplerotic route for replenishing the tricarboxylic acid cycle during growth on fatty acid substrates. The protein is Isocitrate lyase of Corynebacterium glutamicum (strain ATCC 13032 / DSM 20300 / JCM 1318 / BCRC 11384 / CCUG 27702 / LMG 3730 / NBRC 12168 / NCIMB 10025 / NRRL B-2784 / 534).